The sequence spans 385 residues: Putative F-box protein At1g47765 (385 aa).

The segment covering 1-19 (MEQQKQKKRKVVSKSKRTQ) has biased composition (basic residues). The interval 1 to 24 (MEQQKQKKRKVVSKSKRTQSKSAS) is disordered. Residues 20 to 69 (SKSASSLPLDLTSEILLRLPEKSIARFRCVSKLWLSITTDPYFINLFETR) enclose the F-box domain.

The polypeptide is Putative F-box protein At1g47765 (Arabidopsis thaliana (Mouse-ear cress)).